A 39-amino-acid polypeptide reads, in one-letter code: Neuropeptide F (39 aa).

Phenylalanine amide is present on Phe-39.

Belongs to the NPY family. In terms of tissue distribution, neuronal somata and fibers.

It is found in the secreted. Functionally, may have an important physiological role in neuroregulation. The sequence is that of Neuropeptide F from Cornu aspersum (Brown garden snail).